We begin with the raw amino-acid sequence, 283 residues long: Acetylglutamate kinase (283 aa).

Residues 64–65 (GG), Arg86, and Asn178 each bind substrate.

It belongs to the acetylglutamate kinase family. ArgB subfamily.

It localises to the cytoplasm. The catalysed reaction is N-acetyl-L-glutamate + ATP = N-acetyl-L-glutamyl 5-phosphate + ADP. The protein operates within amino-acid biosynthesis; L-arginine biosynthesis; N(2)-acetyl-L-ornithine from L-glutamate: step 2/4. Its function is as follows. Catalyzes the ATP-dependent phosphorylation of N-acetyl-L-glutamate. This chain is Acetylglutamate kinase, found in Lactococcus lactis subsp. cremoris (strain SK11).